A 166-amino-acid polypeptide reads, in one-letter code: Disulfide bond formation protein B (166 aa).

Residues 1–11 lie on the Cytoplasmic side of the membrane; sequence MIALPRNRRPL. A helical membrane pass occupies residues 12-28; sequence FLAVFAYCAALLAFGLY. The Periplasmic segment spans residues 29 to 46; it reads LQHYQGIEPCPMCIMQRY. The cysteines at positions 38 and 41 are disulfide-linked. Residues 47–63 form a helical membrane-spanning segment; sequence AFALVGVIALVAGLHGP. Residues 64-70 lie on the Cytoplasmic side of the membrane; the sequence is RGAGVRV. Residues 71-87 form a helical membrane-spanning segment; that stretch reads YGGLLLLTALAGGSVAA. At 88–143 the chain is on the periplasmic side; the sequence is RQTWMQLYPPEIPECGPGLEYMLESFPLTSALPMIFRGAGDCSAIDWTFLGLSLAN. A disulfide bridge links C102 with C129. The helical transmembrane segment at 144 to 162 threads the bilayer; the sequence is WSLLNFGAAALLALWLLFG. Residues 163 to 166 are Cytoplasmic-facing; that stretch reads RRVR.

Belongs to the DsbB family.

Its subcellular location is the cell inner membrane. Required for disulfide bond formation in some periplasmic proteins. Acts by oxidizing the DsbA protein. This chain is Disulfide bond formation protein B, found in Azoarcus sp. (strain BH72).